The sequence spans 103 residues: Thioredoxin-1 (103 aa).

Residues 2-103 (VKQVSDSSEF…KLEASIKANL (102 aa)) enclose the Thioredoxin domain. Catalysis depends on nucleophile residues cysteine 30 and cysteine 33. Residues cysteine 30 and cysteine 33 are joined by a disulfide bond.

The protein belongs to the thioredoxin family.

Participates in various redox reactions through the reversible oxidation of its active center dithiol to a disulfide and catalyzes dithiol-disulfide exchange reactions. This is Thioredoxin-1 (trx1) from Schizosaccharomyces pombe (strain 972 / ATCC 24843) (Fission yeast).